Consider the following 1579-residue polypeptide: Eukaryotic translation initiation factor 4 gamma 3 (1579 aa).

Disordered stretches follow at residues 1–35 and 128–326; these read MNSQ…RPGV and TQQQ…GPSL. Over residues 10 to 25 the composition is skewed to low complexity; sequence PFFQRPQIQPPRAAIP. Residues 26–35 are compositionally biased toward polar residues; sequence NSSPSIRPGV. Residues 134-162 form a PABPC1-binding region; the sequence is PAKREKKTIRIRDPNQGGKDITEEIMSGG. Residues 167–183 show a composition bias toward pro residues; that stretch reads PTPPIGRPASTPTPPQQ. Thr-168 is subject to Phosphothreonine. Phosphoserine is present on residues Ser-230, Ser-232, and Ser-267. Residues 266–292 are compositionally biased toward low complexity; sequence SSPTSLPPLARSSLPSPMSAALSSQPL. The span at 295 to 308 shows a compositional bias: basic and acidic residues; it reads AEDKCELPSSKEED. Positions 315 to 326 are enriched in polar residues; the sequence is PTSCTAASGPSL. Phosphoserine is present on residues Ser-436, Ser-470, Ser-472, and Ser-490. The segment covering 454 to 470 has biased composition (basic and acidic residues); it reads RTCLSKDAKEMQDKAES. Disordered stretches follow at residues 454-615, 681-706, and 724-744; these read RTCL…DTEG, RQTP…QRRE, and AENA…PESI. Acidic residues predominate over residues 471-480; it reads ESDGQAEETA. A compositionally biased stretch (polar residues) spans 481 to 501; sequence DPQSLHSGRSPAPVQTATTAP. 2 stretches are compositionally biased toward basic and acidic residues: residues 506 to 515 and 549 to 563; these read KTKEQTRTPD and SERD…KAEE. Low complexity predominate over residues 589-598; sequence SGSADSSADG. The segment covering 606-615 has biased composition (basic and acidic residues); it reads ESWKPADTEG. The tract at residues 614–625 is EIF4E-binding; the sequence is EGKKQYDREFLL. Residues 694-1014 form an eIF3/EIF4A-binding region; sequence VGPRRSQPGQ…EQRKVQQLMT (321 aa). 5 HEAT repeats span residues 740 to 778, 779 to 826, 827 to 900, 901 to 939, and 940 to 979; these read DPES…LTVD, TEER…GNTV, NFRK…LKML, TEAI…DFEK, and AKPR…LCNW. Residues 750-978 form the MIF4G domain; it reads FRKVRSILNK…QDVIDLRLCN (229 aa). Residues 855 to 871 are compositionally biased toward basic and acidic residues; that stretch reads KELEAASAPEERTRLHD. The segment at 855-875 is disordered; the sequence is KELEAASAPEERTRLHDELEE. A coiled-coil region spans residues 989-1018; that stretch reads KTIEQIHKEAKIEEQEEQRKVQQLMTKEKR. Disordered stretches follow at residues 1009 to 1037 and 1067 to 1214; these read VQQL…QGAK and LGSW…LSEE. The segment covering 1086–1098 has biased composition (low complexity); it reads LRSSASSLNRFSP. A Phosphoserine; by CaMK1 modification is found at Ser-1150. 2 stretches are compositionally biased toward basic and acidic residues: residues 1150 to 1169 and 1179 to 1197; these read SSKD…EMLE and DAER…ELAK. Positions 1154–1176 form a coiled coil; the sequence is LLDNQSQEEQRREMLETVKQLTG. A Phosphoserine modification is found at Ser-1212. The MI domain maps to 1215–1337; it reads EVERKSKSII…SMRELIVEFS (123 aa). A coiled-coil region spans residues 1406 to 1438; the sequence is SSEALSKKELSAEELSQRLEKLIMEEKADDERI. The W2 domain occupies 1410-1579; that stretch reads LSKKELSAEE…REAEEESEDN (170 aa). An EIF4A-binding region spans residues 1427-1579; the sequence is LIMEEKADDE…REAEEESEDN (153 aa). Residues 1565-1579 form a necessary but not sufficient for MKNK1-binding region; the sequence is FFTWLREAEEESEDN.

This sequence belongs to the eukaryotic initiation factor 4G family. Interacts with EIF4A, EIF4E, eIF3 and PABPC1. Part of a complex with EIF4E. eIF4F is a multi-subunit complex, the composition of which varies with external and internal environmental conditions. It is composed of at least EIF4A, EIF4E and EIF4G1/EIF4G3. EIF4G1/EIF4G3 interacts through its C-terminus with the serine/threonine kinases MKNK1, and with MKNK2. Appears to act as a scaffold protein, holding these enzymes in place to phosphorylate eIF4E. Non-phosphorylated EIF4EBP1 competes with EIF4G1/EIFG3 to interact with EIF4E; insulin stimulated MAP-kinase (MAPK1 and MAPK3) phosphorylation of EIF4EBP1 causes dissociation of the complex allowing EIF4G1/EIF4G3 to bind and consequent initiation of translation. EIF4G1/EIF4G3 interacts with PABPC1 to bring about circularization of the mRNA. Interacts with FXR1; promoting translation of FXR1 target mRNAs.

Functionally, component of the protein complex eIF4F, which is involved in the recognition of the mRNA cap, ATP-dependent unwinding of 5'-terminal secondary structure and recruitment of mRNA to the ribosome. Functional homolog of EIF4G1. This Mus musculus (Mouse) protein is Eukaryotic translation initiation factor 4 gamma 3 (Eif4g3).